Consider the following 681-residue polypeptide: Potassium-transporting ATPase ATP-binding subunit (681 aa).

The next 4 helical transmembrane spans lie at 30 to 50 (LLVY…FFGI), 59 to 79 (LAIA…EAIA), 216 to 236 (ILLV…LPFT), and 255 to 275 (IALL…SIGI). Asp306 acts as the 4-aspartylphosphate intermediate in catalysis. ATP-binding positions include Asp343, Glu347, 376–383 (FTATTRMS), and Lys394. Mg(2+) is bound by residues Asp517 and Asp521. Helical transmembrane passes span 587–607 (FAII…LNLM), 615–635 (AILS…PLSL), and 661–681 (LIAP…LGIV).

This sequence belongs to the cation transport ATPase (P-type) (TC 3.A.3) family. Type IA subfamily. The system is composed of three essential subunits: KdpA, KdpB and KdpC.

Its subcellular location is the cell membrane. The enzyme catalyses K(+)(out) + ATP + H2O = K(+)(in) + ADP + phosphate + H(+). Its function is as follows. Part of the high-affinity ATP-driven potassium transport (or Kdp) system, which catalyzes the hydrolysis of ATP coupled with the electrogenic transport of potassium into the cytoplasm. This subunit is responsible for energy coupling to the transport system and for the release of the potassium ions to the cytoplasm. The chain is Potassium-transporting ATPase ATP-binding subunit from Listeria monocytogenes serotype 4a (strain HCC23).